The sequence spans 3357 residues: Versican core protein (3357 aa).

The N-terminal stretch at 1-23 is a signal peptide; sequence MLINMKGILWMCSTLLLTHALHQ. The region spanning 24-146 is the Ig-like V-type domain; the sequence is AKMETSPPVK…EDTQDTMSLA (123 aa). 5 cysteine pairs are disulfide-bonded: C44–C130, C172–C243, C196–C217, C270–C333, and C294–C315. N57 carries N-linked (GlcNAc...) asparagine glycosylation. 2 Link domains span residues 150–245 and 251–347; these read VVFH…YCYV and DVFH…YCFK. N330, N351, and N441 each carry an N-linked (GlcNAc...) asparagine glycan. The interval 348 to 1308 is GAG-alpha (glucosaminoglycan attachment domain); that stretch reads PKQNISEATT…IIEVRENKTG (961 aa). Residues 625-634 are compositionally biased toward basic and acidic residues; sequence EPKTNGKVTE. The interval 625–646 is disordered; that stretch reads EPKTNGKVTEDEFGQSQPTTTF. An O-linked (Xyl...) (chondroitin sulfate) serine glycan is attached at S660. Disordered stretches follow at residues 801 to 863 and 881 to 908; these read WPGD…KPLE and TSTSIGSAEKSASGEPTTGDRFLPTTST. N807 is a glycosylation site (N-linked (GlcNAc...) asparagine). N914 and N951 each carry an N-linked (GlcNAc...) asparagine glycan. 2 disordered regions span residues 1010 to 1088 and 1252 to 1288; these read SPGA…YPPG and DHMTSKPPVTQPTRPSVVERKTTSKTQELSTSTPAAG. 2 stretches are compositionally biased toward polar residues: residues 1017–1042 and 1275–1286; these read TGVSQGETQEEPQTPGSPFPTFSSTA and SKTQELSTSTPA. N1305 and N1371 each carry an N-linked (GlcNAc...) asparagine glycan. The segment at 1309–3051 is GAG-beta; the sequence is RLSDMIVSGH…VEGTAVYLPG (1743 aa). Residues 1396–1406 show a composition bias toward basic and acidic residues; sequence DPEAAEARRGQ. 2 disordered regions span residues 1396-1421 and 1458-1524; these read DPEAAEARRGQYESVAPSQNFPDSSA and TYPE…AIEQ. Composition is skewed to polar residues over residues 1411–1421 and 1487–1498; these read APSQNFPDSSA and WSESITESSPNL. 2 O-linked (Xyl...) (chondroitin sulfate) serine glycosylation sites follow: S1517 and S1599. A disordered region spans residues 1664–1705; sequence LPSPDARPTTVWNSNSTSEWVSDKSFEGRKKKENEDEEGAVN. The segment covering 1673–1683 has biased composition (polar residues); that stretch reads TVWNSNSTSEW. N1678 is a glycosylation site (N-linked (GlcNAc...) asparagine). Over residues 1684 to 1697 the composition is skewed to basic and acidic residues; that stretch reads VSDKSFEGRKKKEN. S1907 and S1931 each carry an O-linked (Xyl...) (chondroitin sulfate) serine glycan. Positions 1926–1965 are disordered; it reads VGMGGSDDERVRDTQTSSSIPTTSDNIYPVPDSKGPDSTV. Over residues 1939–1951 the composition is skewed to polar residues; that stretch reads TQTSSSIPTTSDN. A glycan (N-linked (GlcNAc...) asparagine) is linked at N2053. O-linked (Xyl...) (chondroitin sulfate) serine glycosylation is found at S2219 and S2226. A glycan (N-linked (GlcNAc...) asparagine) is linked at N2243. Over residues 2308–2322 the composition is skewed to polar residues; sequence TLSHTGTEEPTTSTL. Disordered regions lie at residues 2308 to 2374 and 2475 to 2494; these read TLSH…ATSP and YPTSTLPSTEPYKSPSEGIE. N-linked (GlcNAc...) asparagine glycosylation is present at N2361. Residues 2475–2486 are compositionally biased toward low complexity; that stretch reads YPTSTLPSTEPY. Phosphoserine occurs at positions 2585 and 2586. N-linked (GlcNAc...) asparagine glycosylation occurs at N2626. Residues S2696, S2697, and S2741 are each glycosylated (O-linked (Xyl...) (chondroitin sulfate) serine). The tract at residues 2853-2908 is disordered; that stretch reads LGGNVHRTEPPSMSRDPALDVSEDESKHKLLEELETSPTKPETSQDFPNKAKDHIP. Residues 2888 to 2899 are compositionally biased toward polar residues; sequence TSPTKPETSQDF. A glycan (N-linked (GlcNAc...) asparagine) is linked at N3029. The region spanning 3051–3087 is the EGF-like 1 domain; that stretch reads GPDLCKTNPCLNGGTCYPTETSYVCTCAPGYSGDQCE. Intrachain disulfides connect C3055–C3066, C3060–C3075, C3077–C3086, C3093–C3104, C3098–C3113, C3115–C3124, C3131–C3142, C3159–C3251, C3227–C3243, C3258–C3301, and C3287–C3314. An EGF-like 2; calcium-binding domain is found at 3089–3125; that stretch reads DFDECHSNPCRNGATCVDGFNTFRCLCLPSYVGALCE. One can recognise a C-type lectin domain in the interval 3138–3252; sequence FQGQCYKYFA…CNYHLTYTCK (115 aa). A Sushi domain is found at 3256-3316; the sequence is VACGQPPVVE…WAMPKITCMN (61 aa). Residues N3331 and N3341 are each glycosylated (N-linked (GlcNAc...) asparagine). The span at 3331-3342 shows a compositional bias: polar residues; sequence NSSSAKDNSINT. The tract at residues 3331-3357 is disordered; the sequence is NSSSAKDNSINTSKHEHRWSRRQETRR.

It belongs to the aggrecan/versican proteoglycan family. In terms of assembly, interacts with FBLN1. In terms of processing, phosphorylated by FAM20C in the extracellular medium. Post-translationally, proteolytically cleaved by ADAMTS5 and ADAMTS15 in the pericellular matrix surrounding myoblasts, facilitating myoblast contact and fusion which is required for skeletal muscle development and regeneration. In terms of tissue distribution, expressed in the retina (at protein level). Isoform V2: Only expressed in brain.

It is found in the secreted. Its subcellular location is the extracellular space. The protein localises to the extracellular matrix. The protein resides in the cell projection. It localises to the cilium. It is found in the photoreceptor outer segment. Its subcellular location is the interphotoreceptor matrix. Functionally, may play a role in intercellular signaling and in connecting cells with the extracellular matrix. May take part in the regulation of cell motility, growth and differentiation. Binds hyaluronic acid. This is Versican core protein (Vcan) from Mus musculus (Mouse).